We begin with the raw amino-acid sequence, 143 residues long: UPF0306 protein plu4501 (143 aa).

This sequence belongs to the UPF0306 family.

The chain is UPF0306 protein plu4501 from Photorhabdus laumondii subsp. laumondii (strain DSM 15139 / CIP 105565 / TT01) (Photorhabdus luminescens subsp. laumondii).